The chain runs to 227 residues: Orotidine 5'-phosphate decarboxylase (227 aa).

Residues Asp-8, Lys-30, 59–68, Thr-118, Arg-178, Gln-187, Gly-207, and Arg-208 each bind substrate; that span reads DLKLYDIPYT. Lys-61 acts as the Proton donor in catalysis.

It belongs to the OMP decarboxylase family. Type 1 subfamily. Homodimer.

The enzyme catalyses orotidine 5'-phosphate + H(+) = UMP + CO2. It functions in the pathway pyrimidine metabolism; UMP biosynthesis via de novo pathway; UMP from orotate: step 2/2. In terms of biological role, catalyzes the decarboxylation of orotidine 5'-monophosphate (OMP) to uridine 5'-monophosphate (UMP). In Helicobacter pylori (strain Shi470), this protein is Orotidine 5'-phosphate decarboxylase.